Consider the following 216-residue polypeptide: Gas vesicle protein H (216 aa).

The segment at 1 to 141 (MSPNLNGPGG…IHIETRETDD (141 aa)) is disordered. Residues 15–25 (DRPDEPDDSDR) are compositionally biased toward acidic residues. Basic and acidic residues-rich tracts occupy residues 38–51 (PDDR…RPSD), 73–84 (DGHRQGHGRIDR), and 107–141 (KPSD…ETDD).

The protein belongs to the gas vesicle GvpH family. In terms of assembly, gvpF to GvpM interact with each other in vitro, and may form multi-subunit complex(es). Interacts with GvpC. Might interact with GvpA.

It localises to the gas vesicle. In terms of biological role, proteins GvpF to GvpM might be involved in nucleating gas vesicle formation. A minor component of the gas vesicle. Gas vesicles are hollow, gas filled proteinaceous nanostructures found in some microorganisms. They allow positioning of halobacteria at the optimal depth for growth in the poorly aerated, shallow brine pools of their habitat. Its function is as follows. Expression of a 9.5 kb mc-vac DNA fragment containing 2 divergently transcribed regions (gvpD-gvpE-gvpF-gvpG-gvpH-gvpI-gvpJ-gvpK-gvpL-gvpM and gvpA-gvpC-gvpN-gvpO) allows H.volcanii to produce gas vesicles. This is Gas vesicle protein H from Haloferax mediterranei (strain ATCC 33500 / DSM 1411 / JCM 8866 / NBRC 14739 / NCIMB 2177 / R-4) (Halobacterium mediterranei).